Here is a 474-residue protein sequence, read N- to C-terminus: Equilibrative nucleoside transporter 3 (474 aa).

Residues 1 to 53 (MAIISEDDFRHTSNSTYRTASSSLRADQEALLEKLLDRPPPSLQRPEDRFNGT) lie on the Cytoplasmic side of the membrane. Phosphoserine is present on residues serine 21 and serine 23. The Dileucine internalization motif motif lies at 31-32 (LL). Residues 54-74 (YIIFFSLGIGGLLPWNFFVTA) form a helical membrane-spanning segment. The Extracellular portion of the chain corresponds to 75-105 (QEYWIFKLSNCSSPAAGEEPKDSDILNYFES). Asparagine 84 carries an N-linked (GlcNAc...) asparagine glycan. A helical transmembrane segment spans residues 106-126 (YLAVASTVPSVLCLALNFLLV). Over 127-134 (NRVPIRVR) the chain is Cytoplasmic. A helical membrane pass occupies residues 135 to 155 (VLASLTVMLAIFIVMTVLVKV). Residues 156 to 161 (DTSSWT) are Extracellular-facing. Residues 162 to 182 (HSFFTITITCMAILSGTSTIF) traverse the membrane as a helical segment. Residues 183 to 201 (NSSVFGMTGSFPMRNSQAL) lie on the Cytoplasmic side of the membrane. The chain crosses the membrane as a helical span at residues 202 to 222 (ISGGAMGGTLSAVASLVDLAV). The Extracellular segment spans residues 223–230 (ASDVTDST). The chain crosses the membrane as a helical span at residues 231–251 (LAFFLTADIFLALCIGLYLLL). Topologically, residues 252–305 (PRLDYARYYMKPVWPTVFSGEEQLPQDSPSPTSVAPGSSDPQTPPLGPILKKTT) are cytoplasmic. The segment at 272 to 294 (EEQLPQDSPSPTSVAPGSSDPQT) is disordered. Residues 276–292 (PQDSPSPTSVAPGSSDP) show a composition bias toward polar residues. A helical membrane pass occupies residues 306–326 (GLGFCIIYLFFITSLIFPAIC). Over 327–339 (TNIESLSKGSGSP) the chain is Extracellular. A helical transmembrane segment spans residues 340-357 (WSTKFFVPLTTFLLYNFA). Over 358-376 (DLCGRQVTAWIQVPGPRSK) the chain is Cytoplasmic. Residues 377-397 (ALPGLALLRTCFVPLFVFCNY) form a helical membrane-spanning segment. The Extracellular portion of the chain corresponds to 398–414 (QPRGHLHTVLFQSDVYP). The helical transmembrane segment at 415–435 (VLFTSLLGLSNGYLSTLALIY) threads the bilayer. Residues 436 to 453 (GPKIVPRELAEATGVVMT) are Cytoplasmic-facing. A helical transmembrane segment spans residues 454–474 (FYMGLGLVLGSACSALLVHLI).

Belongs to the SLC29A/ENT transporter (TC 2.A.57) family.

The protein localises to the lysosome membrane. It is found in the late endosome membrane. Its subcellular location is the mitochondrion membrane. The protein resides in the cell membrane. The catalysed reaction is adenosine(in) = adenosine(out). It carries out the reaction guanosine(in) = guanosine(out). It catalyses the reaction inosine(in) = inosine(out). The enzyme catalyses uridine(out) = uridine(in). The catalysed reaction is cytidine(in) = cytidine(out). It carries out the reaction thymidine(in) = thymidine(out). It catalyses the reaction 2'-deoxyadenosine(in) = 2'-deoxyadenosine(out). The enzyme catalyses 2'-deoxycytidine(in) = 2'-deoxycytidine(out). The catalysed reaction is guanine(out) = guanine(in). It carries out the reaction uracil(in) = uracil(out). It catalyses the reaction (R)-noradrenaline(out) = (R)-noradrenaline(in). The enzyme catalyses dopamine(out) = dopamine(in). The catalysed reaction is serotonin(out) = serotonin(in). It carries out the reaction tyramine(in) = tyramine(out). It catalyses the reaction ATP(in) = ATP(out). Functionally, uniporter that mediates the facilitative transport of nucleoside across lysosomal and mitochondrial membranes. Functions as a non-electrogenic Na(+)-independent transporter. Substrate transport is pH-dependent and enhanced under acidic condition, probably reflecting the location of the transporter in acidic intracellular compartments. Proton is not a cotransporting ion but most likely change the ionization state of the transporter which dictates transport-permissible/impermissible conformation for nucleoside translocation. May direct the nucleoside transport from lysosomes to cytosol or cytosol to mitochondria to facilitate the fundamental function of salvage synthesis of nucleic acids. Involved in the transport of nucleosides (adenosine, guanosine, uridine, thymidine, cytidine and inosine) and deoxynucleosides (deoxyadenosine, deoxycytidine). Also mediates transport of purine nucleobases (adenine, guanine) and pyrimidine nucleobases (uracil). Also able to transport monoamine neurotransmitters dopamine, serotonin, noradrenaline and tyramine. Capable of transporting ATP. Mediates nucleoside export from lysosomes in macrophages, which regulates macrophage functions and numbers. This Bos taurus (Bovine) protein is Equilibrative nucleoside transporter 3 (SLC29A3).